Reading from the N-terminus, the 289-residue chain is Glucosamine-6-phosphate deaminase 1 (289 aa).

N6-acetyllysine is present on K64. D72 acts as the Proton acceptor; for enolization step in catalysis. D141 acts as the For ring-opening step in catalysis. The Proton acceptor; for ring-opening step role is filled by H143. E148 (for ring-opening step) is an active-site residue. At T161 the chain carries Phosphothreonine.

The protein belongs to the glucosamine/galactosamine-6-phosphate isomerase family. As to quaternary structure, homohexamer.

The protein localises to the cytoplasm. It carries out the reaction alpha-D-glucosamine 6-phosphate + H2O = beta-D-fructose 6-phosphate + NH4(+). The protein operates within nucleotide-sugar biosynthesis; UDP-N-acetyl-alpha-D-glucosamine biosynthesis; alpha-D-glucosamine 6-phosphate from D-fructose 6-phosphate: step 1/1. Allosterically activated by N-acetylglucosamine-6-phosphate (GlcNAc6P). Catalyzes the reversible conversion of alpha-D-glucosamine 6-phosphate (GlcN-6P) into beta-D-fructose 6-phosphate (Fru-6P) and ammonium ion, a regulatory reaction step in de novo uridine diphosphate-N-acetyl-alpha-D-glucosamine (UDP-GlcNAc) biosynthesis via hexosamine pathway. Deamination is coupled to aldo-keto isomerization mediating the metabolic flux from UDP-GlcNAc toward Fru-6P. At high ammonium level can drive amination and isomerization of Fru-6P toward hexosamines and UDP-GlcNAc synthesis. Has a role in fine tuning the metabolic fluctuations of cytosolic UDP-GlcNAc and their effects on hyaluronan synthesis that occur during tissue remodeling. Seems to trigger calcium oscillations in mammalian eggs. These oscillations serve as the essential trigger for egg activation and early development of the embryo. This Homo sapiens (Human) protein is Glucosamine-6-phosphate deaminase 1.